The following is a 373-amino-acid chain: Putative glutamate--cysteine ligase 2 (373 aa).

It belongs to the glutamate--cysteine ligase type 2 family. YbdK subfamily. Homodimer.

It catalyses the reaction L-cysteine + L-glutamate + ATP = gamma-L-glutamyl-L-cysteine + ADP + phosphate + H(+). ATP-dependent carboxylate-amine ligase which exhibits weak glutamate--cysteine ligase activity. This is Putative glutamate--cysteine ligase 2 from Enterobacter sp. (strain 638).